The sequence spans 169 residues: Ribosome maturation factor RimM (169 aa).

Positions glutamate 94–leucine 167 constitute a PRC barrel domain.

Belongs to the RimM family. Binds ribosomal protein uS19.

Its subcellular location is the cytoplasm. Functionally, an accessory protein needed during the final step in the assembly of 30S ribosomal subunit, possibly for assembly of the head region. Essential for efficient processing of 16S rRNA. May be needed both before and after RbfA during the maturation of 16S rRNA. It has affinity for free ribosomal 30S subunits but not for 70S ribosomes. The chain is Ribosome maturation factor RimM from Listeria welshimeri serovar 6b (strain ATCC 35897 / DSM 20650 / CCUG 15529 / CIP 8149 / NCTC 11857 / SLCC 5334 / V8).